We begin with the raw amino-acid sequence, 900 residues long: Alanine--tRNA ligase (900 aa).

Zn(2+) contacts are provided by H604, H608, C708, and H712.

The protein belongs to the class-II aminoacyl-tRNA synthetase family. The cofactor is Zn(2+).

The protein localises to the cytoplasm. The catalysed reaction is tRNA(Ala) + L-alanine + ATP = L-alanyl-tRNA(Ala) + AMP + diphosphate. Catalyzes the attachment of alanine to tRNA(Ala) in a two-step reaction: alanine is first activated by ATP to form Ala-AMP and then transferred to the acceptor end of tRNA(Ala). Also edits incorrectly charged Ser-tRNA(Ala) and Gly-tRNA(Ala) via its editing domain. The sequence is that of Alanine--tRNA ligase from Saccharolobus islandicus (strain M.16.27) (Sulfolobus islandicus).